Here is a 592-residue protein sequence, read N- to C-terminus: BTB/POZ domain-containing protein At5g03250 (592 aa).

The 71-residue stretch at 28–98 folds into the BTB domain; the sequence is SDVTIEVGDM…CYGVKIELTA (71 aa). Residues 217–502 form the NPH3 domain; that stretch reads DWWFDDASFL…VQVLFFEQLR (286 aa). Tyr443 carries the phosphotyrosine modification.

Belongs to the NPH3 family.

It functions in the pathway protein modification; protein ubiquitination. In terms of biological role, may act as a substrate-specific adapter of an E3 ubiquitin-protein ligase complex (CUL3-RBX1-BTB) which mediates the ubiquitination and subsequent proteasomal degradation of target proteins. This chain is BTB/POZ domain-containing protein At5g03250, found in Arabidopsis thaliana (Mouse-ear cress).